The sequence spans 894 residues: Translation factor GUF1 homolog, mitochondrial (894 aa).

Positions 157–189 are disordered; that stretch reads EDEGLDGGPPPGMEAKKSSSSSSSNNVHSNCSD. Positions 174–188 are enriched in low complexity; it reads SSSSSSSNNVHSNCS. Residues 199–376 form the tr-type G domain; sequence ENIRNFCILA…RIVSEIPSPA (178 aa). GTP contacts are provided by residues 208–215, 269–273, and 323–326; these read AHIDSGKS, DTPGH, and NKID. Residues 649 to 674 form a disordered region; the sequence is DHDDCNDNGGSNSDDRSDRSGKNPPD.

Belongs to the TRAFAC class translation factor GTPase superfamily. Classic translation factor GTPase family. LepA subfamily.

It is found in the mitochondrion inner membrane. The enzyme catalyses GTP + H2O = GDP + phosphate + H(+). Promotes mitochondrial protein synthesis. May act as a fidelity factor of the translation reaction, by catalyzing a one-codon backward translocation of tRNAs on improperly translocated ribosomes. Binds to mitochondrial ribosomes in a GTP-dependent manner. The polypeptide is Translation factor GUF1 homolog, mitochondrial (Plasmodium knowlesi (strain H)).